Reading from the N-terminus, the 432-residue chain is Glucose-6-phosphate isomerase (432 aa).

Glutamate 283 acts as the Proton donor in catalysis. Catalysis depends on residues histidine 304 and lysine 418.

The protein belongs to the GPI family.

Its subcellular location is the cytoplasm. It catalyses the reaction alpha-D-glucose 6-phosphate = beta-D-fructose 6-phosphate. It participates in carbohydrate biosynthesis; gluconeogenesis. It functions in the pathway carbohydrate degradation; glycolysis; D-glyceraldehyde 3-phosphate and glycerone phosphate from D-glucose: step 2/4. Functionally, catalyzes the reversible isomerization of glucose-6-phosphate to fructose-6-phosphate. This is Glucose-6-phosphate isomerase from Rubrobacter xylanophilus (strain DSM 9941 / JCM 11954 / NBRC 16129 / PRD-1).